A 227-amino-acid polypeptide reads, in one-letter code: 2,3-bisphosphoglycerate-dependent phosphoglycerate mutase (227 aa).

Substrate contacts are provided by residues 7-14, 20-21, arginine 59, 86-89, lysine 97, 113-114, and 182-183; these read RHGQSEWN, TG, ERHY, RR, and GN. The Tele-phosphohistidine intermediate role is filled by histidine 8. Residue glutamate 86 is the Proton donor/acceptor of the active site.

This sequence belongs to the phosphoglycerate mutase family. BPG-dependent PGAM subfamily. Homodimer.

The enzyme catalyses (2R)-2-phosphoglycerate = (2R)-3-phosphoglycerate. It functions in the pathway carbohydrate degradation; glycolysis; pyruvate from D-glyceraldehyde 3-phosphate: step 3/5. Its function is as follows. Catalyzes the interconversion of 2-phosphoglycerate and 3-phosphoglycerate. This chain is 2,3-bisphosphoglycerate-dependent phosphoglycerate mutase, found in Neisseria gonorrhoeae (strain ATCC 700825 / FA 1090).